A 607-amino-acid chain; its full sequence is Matrix metalloproteinase-16 (607 aa).

The first 31 residues, 1 to 31 (MILLAFSSGRRLDFVHRSGVFFLQTLLWILC), serve as a signal peptide directing secretion. Residues 32–119 (ATVCGTEQYF…SSKFNIRRKR (88 aa)) constitute a propeptide that is removed on maturation. Residue Asn83 is glycosylated (N-linked (GlcNAc...) asparagine). The Cysteine switch motif lies at 99 to 106 (PRCGVPDQ). Zn(2+) is bound at residue Cys101. Residues 120–564 (YALTGQKWQH…LDNTASTVKA (445 aa)) are Extracellular-facing. Ca(2+) is bound at residue Asp183. The Zn(2+) site is built by His193 and Asp195. 4 residues coordinate Ca(2+): Asp200, Gly201, Gly203, and Phe205. His208 lines the Zn(2+) pocket. The Ca(2+) site is built by Gly215, Gly217, and Asp219. His221 serves as a coordination point for Zn(2+). Positions 223 and 226 each coordinate Ca(2+). His246 is a binding site for Zn(2+). Glu247 is a catalytic residue. Residues His250 and His256 each contribute to the Zn(2+) site. The segment at 281–340 (DDLQGIQKIYGPPDKIPPPTRPLPTVPPHRSVPPADPRRHDRPKPPRPPTGRPSYPGAKP) is disordered. Pro residues predominate over residues 294–315 (DKIPPPTRPLPTVPPHRSVPPA). Hemopexin repeat units follow at residues 340-388 (PNIC…WRGL), 389-434 (PPSI…GNGI), 436-484 (PHGI…KGIP), and 485-532 (ESPQ…FMGC). A disulfide bridge links Cys343 with Cys532. Residues 565-585 (IAIVIPCILALCLLVLVYTVF) form a helical membrane-spanning segment. Residues 586–607 (QFKRKGTPRHILYCKRSMQEWV) lie on the Cytoplasmic side of the membrane.

It belongs to the peptidase M10A family. Interacts with CSPG4 through CSPG4 chondroitin sulfate glycosaminoglycan. Zn(2+) is required as a cofactor. Ca(2+) serves as cofactor. The precursor is cleaved by a furin endopeptidase.

The protein resides in the cell membrane. In terms of biological role, endopeptidase that degrades various components of the extracellular matrix, such as collagen type III and fibronectin. Activates progelatinase A. Involved in the matrix remodeling of blood vessels. It has no effect on type I, II, IV and V collagen. However, upon interaction with CSPG4, it may be involved in degradation and invasion of type I collagen by melanoma cells. The sequence is that of Matrix metalloproteinase-16 (Mmp16) from Mus musculus (Mouse).